Here is a 261-residue protein sequence, read N- to C-terminus: Cytochrome c oxidase subunit 3 (261 aa).

Residues 1–15 (MTKQMHAFHMVNPSP) are Mitochondrial matrix-facing. Residues 16–34 (WPLTGAASAFMLTSGLAMW) form a helical membrane-spanning segment. Topologically, residues 35-40 (FHKHSN) are mitochondrial intermembrane. Residues 41–66 (TLIFLSMILMLLTMYQWWRDITREGT) traverse the membrane as a helical segment. Topologically, residues 67 to 72 (FQGHHT) are mitochondrial matrix. Residues 73–105 (SLVQKSLRYGMILFIVSEVCFFFGFFWTFYHSS) form a helical membrane-spanning segment. The Mitochondrial intermembrane portion of the chain corresponds to 106 to 128 (LSPSPDLGMMWPPKGVIPLDPFE). A helical transmembrane segment spans residues 129–152 (IPLLNTAILLGSGVSVTWAHHSLM). Over 153 to 155 (EKT) the chain is Mitochondrial matrix. A helical transmembrane segment spans residues 156-183 (HKDMVISLSITIILGIYFTLLQGMEYFN). Residues 184-190 (STFNISD) are Mitochondrial intermembrane-facing. A helical membrane pass occupies residues 191–223 (NAYGSTFFVATGFHGGHVIIGTLFLTVCLLRQL). The Mitochondrial matrix segment spans residues 224–232 (MFHFTSSHH). A helical transmembrane segment spans residues 233-256 (FGFEAAAWYWHFVDVVWLFLFISI). The Mitochondrial intermembrane portion of the chain corresponds to 257–261 (YWWGS).

It belongs to the cytochrome c oxidase subunit 3 family. Component of the cytochrome c oxidase (complex IV, CIV), a multisubunit enzyme composed of 14 subunits. The complex is composed of a catalytic core of 3 subunits MT-CO1, MT-CO2 and MT-CO3, encoded in the mitochondrial DNA, and 11 supernumerary subunits COX4I, COX5A, COX5B, COX6A, COX6B, COX6C, COX7A, COX7B, COX7C, COX8 and NDUFA4, which are encoded in the nuclear genome. The complex exists as a monomer or a dimer and forms supercomplexes (SCs) in the inner mitochondrial membrane with NADH-ubiquinone oxidoreductase (complex I, CI) and ubiquinol-cytochrome c oxidoreductase (cytochrome b-c1 complex, complex III, CIII), resulting in different assemblies (supercomplex SCI(1)III(2)IV(1) and megacomplex MCI(2)III(2)IV(2)).

Its subcellular location is the mitochondrion inner membrane. It catalyses the reaction 4 Fe(II)-[cytochrome c] + O2 + 8 H(+)(in) = 4 Fe(III)-[cytochrome c] + 2 H2O + 4 H(+)(out). Component of the cytochrome c oxidase, the last enzyme in the mitochondrial electron transport chain which drives oxidative phosphorylation. The respiratory chain contains 3 multisubunit complexes succinate dehydrogenase (complex II, CII), ubiquinol-cytochrome c oxidoreductase (cytochrome b-c1 complex, complex III, CIII) and cytochrome c oxidase (complex IV, CIV), that cooperate to transfer electrons derived from NADH and succinate to molecular oxygen, creating an electrochemical gradient over the inner membrane that drives transmembrane transport and the ATP synthase. Cytochrome c oxidase is the component of the respiratory chain that catalyzes the reduction of oxygen to water. Electrons originating from reduced cytochrome c in the intermembrane space (IMS) are transferred via the dinuclear copper A center (CU(A)) of subunit 2 and heme A of subunit 1 to the active site in subunit 1, a binuclear center (BNC) formed by heme A3 and copper B (CU(B)). The BNC reduces molecular oxygen to 2 water molecules using 4 electrons from cytochrome c in the IMS and 4 protons from the mitochondrial matrix. The polypeptide is Cytochrome c oxidase subunit 3 (MT-CO3) (Myxine glutinosa (Atlantic hagfish)).